Consider the following 634-residue polypeptide: uncharacterized protein (634 aa).

This is an uncharacterized protein from Homo sapiens (Human).